We begin with the raw amino-acid sequence, 724 residues long: Phosphoribosylformylglycinamidine synthase subunit PurL (724 aa).

Residue His34 is part of the active site. Residues Tyr37 and Lys75 each coordinate ATP. Glu77 is a Mg(2+) binding site. Residues 78–81 (SHNH) and Arg100 contribute to the substrate site. His79 serves as the catalytic Proton acceptor. Asp101 contacts Mg(2+). Gln221 is a substrate binding site. Asp249 contributes to the Mg(2+) binding site. 292-294 (ESQ) provides a ligand contact to substrate. The ATP site is built by Asp478 and Gly515. Residue Ser518 coordinates substrate.

Belongs to the FGAMS family. As to quaternary structure, monomer. Part of the FGAM synthase complex composed of 1 PurL, 1 PurQ and 2 PurS subunits.

It is found in the cytoplasm. The enzyme catalyses N(2)-formyl-N(1)-(5-phospho-beta-D-ribosyl)glycinamide + L-glutamine + ATP + H2O = 2-formamido-N(1)-(5-O-phospho-beta-D-ribosyl)acetamidine + L-glutamate + ADP + phosphate + H(+). Its pathway is purine metabolism; IMP biosynthesis via de novo pathway; 5-amino-1-(5-phospho-D-ribosyl)imidazole from N(2)-formyl-N(1)-(5-phospho-D-ribosyl)glycinamide: step 1/2. Its function is as follows. Part of the phosphoribosylformylglycinamidine synthase complex involved in the purines biosynthetic pathway. Catalyzes the ATP-dependent conversion of formylglycinamide ribonucleotide (FGAR) and glutamine to yield formylglycinamidine ribonucleotide (FGAM) and glutamate. The FGAM synthase complex is composed of three subunits. PurQ produces an ammonia molecule by converting glutamine to glutamate. PurL transfers the ammonia molecule to FGAR to form FGAM in an ATP-dependent manner. PurS interacts with PurQ and PurL and is thought to assist in the transfer of the ammonia molecule from PurQ to PurL. This is Phosphoribosylformylglycinamidine synthase subunit PurL from Caldivirga maquilingensis (strain ATCC 700844 / DSM 13496 / JCM 10307 / IC-167).